The following is a 2506-amino-acid chain: Zinc finger protein 462 (2506 aa).

3 consecutive C2H2-type zinc fingers follow at residues 4 to 27 (LQCD…QDVH), 108 to 131 (FQCK…RKVH), and 162 to 185 (FSCQ…KMYH). Lysine 20 participates in a covalent cross-link: Glycyl lysine isopeptide (Lys-Gly) (interchain with G-Cter in SUMO1); alternate. Lysine 20 participates in a covalent cross-link: Glycyl lysine isopeptide (Lys-Gly) (interchain with G-Cter in SUMO2); alternate. Residues 215–241 (PCKELPAEVVERSILESMVKPLTKSRG) form an interaction with PBX1 region. Residues lysine 234 and lysine 271 each participate in a glycyl lysine isopeptide (Lys-Gly) (interchain with G-Cter in SUMO2) cross-link. Residues 280–299 (QEGTNLPDVPNKSAPSPTSN) form a disordered region. Residues serine 292 and serine 309 are each glycosylated (O-linked (GlcNAc6P) serine). Glycyl lysine isopeptide (Lys-Gly) (interchain with G-Cter in SUMO2) cross-links involve residues lysine 337, lysine 347, and lysine 349. The disordered stretch occupies residues 337–356 (KFSPMSYPQMKPKSPHNSGL). Phosphoserine is present on residues serine 350 and serine 354. Lysine 428 participates in a covalent cross-link: Glycyl lysine isopeptide (Lys-Gly) (interchain with G-Cter in SUMO2). C2H2-type zinc fingers lie at residues 439–462 (FQCP…ENIH) and 470–492 (YKCD…KQCH). A Glycyl lysine isopeptide (Lys-Gly) (interchain with G-Cter in SUMO2) cross-link involves residue lysine 484. The disordered stretch occupies residues 535-596 (DPLQQQQPPQ…QPQPPTQAAP (62 aa)). The span at 542 to 593 (PPQPPPPPPPPPPSQPQPLQQPQPPQLQPPHQVPPQPQTQPPPTQQPQPPTQ) shows a compositional bias: pro residues. The C2H2-type 6 zinc finger occupies 600–623 (YKCTMCNYSTTTLKGLRVHQQHKH). Residues lysine 631, lysine 657, and lysine 668 each participate in a glycyl lysine isopeptide (Lys-Gly) (interchain with G-Cter in SUMO2) cross-link. The interval 636 to 661 (PSSLPLENETDSHPSSSNTVKKSQTS) is disordered. The span at 648–661 (HPSSSNTVKKSQTS) shows a compositional bias: polar residues. Position 688 is a phosphoserine (serine 688). Glycyl lysine isopeptide (Lys-Gly) (interchain with G-Cter in SUMO2) cross-links involve residues lysine 706 and aspartate 849. C2H2-type zinc fingers lie at residues 843–866 (YYCK…QRMH), 886–908 (YRCL…YGEH), and 925–948 (YRCR…QRMH). A Glycyl lysine isopeptide (Lys-Gly) (interchain with G-Cter in SUMO2) cross-link involves residue lysine 986. The C2H2-type 10 zinc finger occupies 1030–1053 (YDCDVCSFASPNMHSVLVHYQKKH). The residue at position 1090 (serine 1090) is a Phosphoserine. Residue lysine 1135 forms a Glycyl lysine isopeptide (Lys-Gly) (interchain with G-Cter in SUMO2) linkage. The tract at residues 1157-1186 (MRGVEGPQGSPRPPAPIQQLNRSSSERDGP) is disordered. Serine 1166 carries the post-translational modification Phosphoserine. Residues lysine 1206, lysine 1214, lysine 1220, and lysine 1243 each participate in a glycyl lysine isopeptide (Lys-Gly) (interchain with G-Cter in SUMO2) cross-link. 2 C2H2-type zinc fingers span residues 1265–1288 (LKCR…KKDH) and 1470–1493 (YQCT…GKKH). Lysine 1499 participates in a covalent cross-link: Glycyl lysine isopeptide (Lys-Gly) (interchain with G-Cter in SUMO2). Residues 1515-1538 (YKCRHCPYINTRIHGVLTHYQKRH) form a C2H2-type 13 zinc finger. Residues lysine 1571 and lysine 1591 each participate in a glycyl lysine isopeptide (Lys-Gly) (interchain with G-Cter in SUMO2) cross-link. C2H2-type zinc fingers lie at residues 1577 to 1600 (YRCK…EKYH), 1660 to 1683 (FRCQ…RIKH), and 1697 to 1720 (FKCA…QKRH). Glycyl lysine isopeptide (Lys-Gly) (interchain with G-Cter in SUMO2) cross-links involve residues lysine 1698 and lysine 1780. The C2H2-type 17 zinc finger occupies 1892–1914 (YQCKHCDSKLQSTAELTSHLNIH). Lysine 1946 participates in a covalent cross-link: Glycyl lysine isopeptide (Lys-Gly) (interchain with G-Cter in SUMO2). The C2H2-type 18; degenerate zinc finger occupies 1968–1992 (YKCKFCVEVHPTLRAICNHLRKHVQ). Lysine 2004 bears the N6-methyllysine mark. C2H2-type zinc fingers lie at residues 2025–2048 (YSCQ…QTHH), 2054–2077 (FRCK…LKAH), and 2083–2106 (YKCS…LKVH). Residue lysine 2104 forms a Glycyl lysine isopeptide (Lys-Gly) (interchain with G-Cter in SUMO2) linkage. Residues 2122–2152 (SSHSHHSSQKATPAEEVEDSNDSSYSEPPDV) are disordered. Positions 2143–2152 (DSSYSEPPDV) are enriched in polar residues. 2 positions are modified to phosphoserine: serine 2172 and serine 2177. 3 consecutive C2H2-type zinc fingers follow at residues 2191-2214 (LHCE…RDKH), 2220-2243 (FKCK…EAGH), and 2254-2276 (LRCP…IVLH). A Glycyl lysine isopeptide (Lys-Gly) (interchain with G-Cter in SUMO2) cross-link involves residue lysine 2293. 2 C2H2-type zinc fingers span residues 2300–2322 (FRCD…IEKH) and 2328–2351 (YKCQ…RDEH). Residues 2371–2396 (MKEKMESSSSDDEDKEEEMNSKAEDR) are disordered. A C2H2-type 27 zinc finger spans residues 2414–2436 (FPCEFCGRAFSQGSEWERHVLRH). Glycyl lysine isopeptide (Lys-Gly) (interchain with G-Cter in SUMO2) cross-links involve residues lysine 2444 and lysine 2504.

Interacts with PBX1; this interaction prevents PBX1-HOXA9 heterodimer from forming and binding to DNA. O-GlcNAcylated with O-GlcNAc-6-phosphate.

It localises to the nucleus. In terms of biological role, zinc finger nuclear factor involved in transcription by regulating chromatin structure and organization. Involved in the pluripotency and differentiation of embryonic stem cells by regulating SOX2, POU5F1/OCT4, and NANOG. By binding PBX1, prevents the heterodimerization of PBX1 and HOXA9 and their binding to DNA. Regulates neuronal development and neural cell differentiation. This is Zinc finger protein 462 from Homo sapiens (Human).